The chain runs to 397 residues: Elongation factor Tu (397 aa).

A tr-type G domain is found at 10 to 207 (KPHCNIGTIG…EVDKYIPQPE (198 aa)). Residues 19–26 (GHVDHGKT) are G1. GTP is bound at residue 19–26 (GHVDHGKT). Thr26 contributes to the Mg(2+) binding site. Residues 61-65 (GITIS) are G2. The interval 82-85 (DCPG) is G3. GTP contacts are provided by residues 82 to 86 (DCPGH) and 137 to 140 (NKCD). The tract at residues 137–140 (NKCD) is G4. Positions 175–177 (SAL) are G5.

Belongs to the TRAFAC class translation factor GTPase superfamily. Classic translation factor GTPase family. EF-Tu/EF-1A subfamily. In terms of assembly, monomer.

It is found in the cytoplasm. The enzyme catalyses GTP + H2O = GDP + phosphate + H(+). Its function is as follows. GTP hydrolase that promotes the GTP-dependent binding of aminoacyl-tRNA to the A-site of ribosomes during protein biosynthesis. This chain is Elongation factor Tu, found in Azorhizobium caulinodans (strain ATCC 43989 / DSM 5975 / JCM 20966 / LMG 6465 / NBRC 14845 / NCIMB 13405 / ORS 571).